We begin with the raw amino-acid sequence, 403 residues long: Phosphoglycerate kinase (403 aa).

Residues Asp-22–Asn-24, Arg-37, His-60–Arg-63, Arg-119, and Arg-156 contribute to the substrate site. ATP-binding positions include Lys-206, Gly-302, Glu-333, and Gly-359–Ser-362.

The protein belongs to the phosphoglycerate kinase family. Monomer.

The protein resides in the cytoplasm. The enzyme catalyses (2R)-3-phosphoglycerate + ATP = (2R)-3-phospho-glyceroyl phosphate + ADP. It functions in the pathway carbohydrate degradation; glycolysis; pyruvate from D-glyceraldehyde 3-phosphate: step 2/5. This Streptomyces griseus subsp. griseus (strain JCM 4626 / CBS 651.72 / NBRC 13350 / KCC S-0626 / ISP 5235) protein is Phosphoglycerate kinase.